Consider the following 83-residue polypeptide: Cytochrome b559 subunit alpha (83 aa).

The chain crosses the membrane as a helical span at residues 21–35 (VIHSITIPSLFVAGW). Position 23 (H23) interacts with heme.

It belongs to the PsbE/PsbF family. Heterodimer of an alpha subunit and a beta subunit. PSII is composed of 1 copy each of membrane proteins PsbA, PsbB, PsbC, PsbD, PsbE, PsbF, PsbH, PsbI, PsbJ, PsbK, PsbL, PsbM, PsbT, PsbX, PsbY, PsbZ, Psb30/Ycf12, at least 3 peripheral proteins of the oxygen-evolving complex and a large number of cofactors. It forms dimeric complexes. Heme b serves as cofactor.

The protein resides in the plastid. The protein localises to the chloroplast thylakoid membrane. Its function is as follows. This b-type cytochrome is tightly associated with the reaction center of photosystem II (PSII). PSII is a light-driven water:plastoquinone oxidoreductase that uses light energy to abstract electrons from H(2)O, generating O(2) and a proton gradient subsequently used for ATP formation. It consists of a core antenna complex that captures photons, and an electron transfer chain that converts photonic excitation into a charge separation. This is Cytochrome b559 subunit alpha from Nephroselmis olivacea (Green alga).